The chain runs to 204 residues: Phosphoribosyl-dephospho-CoA transferase (204 aa).

Catalysis depends on residues Asp-129 and Asp-131.

Belongs to the MdcG family.

It carries out the reaction apo-[malonate decarboxylase ACP] + 2'-(5''-triphospho-alpha-D-ribosyl)-3'-dephospho-CoA = holo-[malonate decarboxylase ACP] + diphosphate. Transfers 2'-(5-triphosphoribosyl)-3'-dephosphocoenzyme-A to the apo-[acyl-carrier-protein] of the malonate decarboxylase to yield holo-[acyl-carrier-protein]. This is Phosphoribosyl-dephospho-CoA transferase from Pseudomonas putida (Arthrobacter siderocapsulatus).